The primary structure comprises 831 residues: Glycerol-3-phosphate acyltransferase (831 aa).

Residues 304–309 (CHRSHM) carry the HXXXXD motif motif. Residues 801–831 (VSMPAETSNQPEAPETPETPETPEPEGKTES) form a disordered region.

This sequence belongs to the GPAT/DAPAT family.

The protein resides in the cell inner membrane. The catalysed reaction is sn-glycerol 3-phosphate + an acyl-CoA = a 1-acyl-sn-glycero-3-phosphate + CoA. The protein operates within phospholipid metabolism; CDP-diacylglycerol biosynthesis; CDP-diacylglycerol from sn-glycerol 3-phosphate: step 1/3. This chain is Glycerol-3-phosphate acyltransferase, found in Yersinia pseudotuberculosis serotype IB (strain PB1/+).